The sequence spans 64 residues: MPKMKSHRGACKRFKATASGKIKHERMNGSHNLEKKNRKRSRRLHQATILDSAKEKQIRRMILA.

Residues 27–47 (MNGSHNLEKKNRKRSRRLHQA) form a disordered region. Basic residues predominate over residues 36–45 (KNRKRSRRLH).

This sequence belongs to the bacterial ribosomal protein bL35 family.

The chain is Large ribosomal subunit protein bL35 from Chlorobium phaeobacteroides (strain DSM 266 / SMG 266 / 2430).